The sequence spans 111 residues: MSTIKLSLCLLIMLAVCCYEANASQICELVAHETISFLMKSEEELKKELEMYNAPPAAVEAKLEVKRCVDQMSNGDRLVVAETLVYIFLECGVKQWVETYYPEIDFYYDMN.

A signal peptide spans 1–23 (MSTIKLSLCLLIMLAVCCYEANA).

Belongs to the secretoglobin family. Lipophilin subfamily. Prostatein is composed of three different peptides called C1, C2 and C3. These form covalent C1:C3 (F) and C2:C3 (S) heterodimers whose noncovalent association forms tetrameric (C1:C3/C3:C2) prostatein molecules.

It is found in the secreted. Functionally, part of prostatein which is the major secretory glycoprotein of ventral prostate gland. The protein is Prostatic steroid-binding protein C1 (Psbpc1) of Rattus norvegicus (Rat).